The primary structure comprises 153 residues: Superoxide dismutase [Cu-Zn] (153 aa).

Cu cation contacts are provided by H45 and H47. T53 is subject to Phosphothreonine. Cysteines 56 and 145 form a disulfide. Position 59 is a phosphoserine (S59). H62 is a Cu cation binding site. Zn(2+)-binding residues include H62, H70, H79, and D82. H119 lines the Cu cation pocket.

Belongs to the Cu-Zn superoxide dismutase family. In terms of assembly, homodimer. Cu cation is required as a cofactor. Zn(2+) serves as cofactor.

The protein resides in the cytoplasm. The catalysed reaction is 2 superoxide + 2 H(+) = H2O2 + O2. Functionally, destroys radicals which are normally produced within the cells and which are toxic to biological systems. This Drosophila melanogaster (Fruit fly) protein is Superoxide dismutase [Cu-Zn].